The primary structure comprises 340 residues: Ketol-acid reductoisomerase (NADP(+)) (340 aa).

The KARI N-terminal Rossmann domain occupies 3-183; the sequence is LPIYYDKDCD…GGGRTGIIHT (181 aa). NADP(+) is bound by residues 26–29, S54, and 84–87; these read FGSQ and DEIQ. H109 is a catalytic residue. G135 serves as a coordination point for NADP(+). Residues 184–329 form the KARI C-terminal knotted domain; that stretch reads TFKDETETDL…KRLRAMMPWI (146 aa). Mg(2+) contacts are provided by D192, E196, E228, and E232. A substrate-binding site is contributed by S253.

This sequence belongs to the ketol-acid reductoisomerase family. Mg(2+) is required as a cofactor.

It catalyses the reaction (2R)-2,3-dihydroxy-3-methylbutanoate + NADP(+) = (2S)-2-acetolactate + NADPH + H(+). It carries out the reaction (2R,3R)-2,3-dihydroxy-3-methylpentanoate + NADP(+) = (S)-2-ethyl-2-hydroxy-3-oxobutanoate + NADPH + H(+). It functions in the pathway amino-acid biosynthesis; L-isoleucine biosynthesis; L-isoleucine from 2-oxobutanoate: step 2/4. It participates in amino-acid biosynthesis; L-valine biosynthesis; L-valine from pyruvate: step 2/4. In terms of biological role, involved in the biosynthesis of branched-chain amino acids (BCAA). Catalyzes an alkyl-migration followed by a ketol-acid reduction of (S)-2-acetolactate (S2AL) to yield (R)-2,3-dihydroxy-isovalerate. In the isomerase reaction, S2AL is rearranged via a Mg-dependent methyl migration to produce 3-hydroxy-3-methyl-2-ketobutyrate (HMKB). In the reductase reaction, this 2-ketoacid undergoes a metal-dependent reduction by NADPH to yield (R)-2,3-dihydroxy-isovalerate. This is Ketol-acid reductoisomerase (NADP(+)) from Nitratiruptor sp. (strain SB155-2).